The primary structure comprises 168 residues: Cyclin-dependent kinase 4 inhibitor C (168 aa).

5 ANK repeats span residues 4–33 (PWGN…NVNA), 37–65 (FGRT…NPNL), 69–98 (TGFA…DVNI), 102–132 (EGNL…NVGH), and 136–165 (KGDT…GGAT).

It belongs to the CDKN2 cyclin-dependent kinase inhibitor family. Heterodimer of p18 with CDK6.

In terms of biological role, interacts strongly with CDK6, weakly with CDK4. Inhibits cell growth and proliferation with a correlated dependence on endogenous retinoblastoma protein RB. The sequence is that of Cyclin-dependent kinase 4 inhibitor C (Cdkn2c) from Mus musculus (Mouse).